Reading from the N-terminus, the 295-residue chain is Phosphoribosylaminoimidazole-succinocarboxamide synthase (295 aa).

Belongs to the SAICAR synthetase family.

It catalyses the reaction 5-amino-1-(5-phospho-D-ribosyl)imidazole-4-carboxylate + L-aspartate + ATP = (2S)-2-[5-amino-1-(5-phospho-beta-D-ribosyl)imidazole-4-carboxamido]succinate + ADP + phosphate + 2 H(+). The protein operates within purine metabolism; IMP biosynthesis via de novo pathway; 5-amino-1-(5-phospho-D-ribosyl)imidazole-4-carboxamide from 5-amino-1-(5-phospho-D-ribosyl)imidazole-4-carboxylate: step 1/2. The protein is Phosphoribosylaminoimidazole-succinocarboxamide synthase of Nitrosomonas europaea (strain ATCC 19718 / CIP 103999 / KCTC 2705 / NBRC 14298).